Reading from the N-terminus, the 172-residue chain is 3-hydroxydecanoyl-[acyl-carrier-protein] dehydratase (172 aa).

Histidine 71 is an active-site residue.

Belongs to the thioester dehydratase family. FabA subfamily. In terms of assembly, homodimer.

It is found in the cytoplasm. It carries out the reaction a (3R)-hydroxyacyl-[ACP] = a (2E)-enoyl-[ACP] + H2O. The catalysed reaction is (3R)-hydroxydecanoyl-[ACP] = (2E)-decenoyl-[ACP] + H2O. It catalyses the reaction (2E)-decenoyl-[ACP] = (3Z)-decenoyl-[ACP]. The protein operates within lipid metabolism; fatty acid biosynthesis. Necessary for the introduction of cis unsaturation into fatty acids. Catalyzes the dehydration of (3R)-3-hydroxydecanoyl-ACP to E-(2)-decenoyl-ACP and then its isomerization to Z-(3)-decenoyl-ACP. Can catalyze the dehydratase reaction for beta-hydroxyacyl-ACPs with saturated chain lengths up to 16:0, being most active on intermediate chain length. The polypeptide is 3-hydroxydecanoyl-[acyl-carrier-protein] dehydratase (Vibrio parahaemolyticus serotype O3:K6 (strain RIMD 2210633)).